Consider the following 587-residue polypeptide: RuBisCO large subunit-binding protein subunit alpha, chloroplastic (587 aa).

A compositionally biased stretch (polar residues) spans 1-25 (MASTNALSSTSILRSPTNQAQTSLS). A disordered region spans residues 1-33 (MASTNALSSTSILRSPTNQAQTSLSKKVKQHGR). A chloroplast-targeting transit peptide spans 1 to 47 (MASTNALSSTSILRSPTNQAQTSLSKKVKQHGRVNFRQKPNRFVVKA).

It belongs to the chaperonin (HSP60) family. As to quaternary structure, oligomer of probably six alpha and six beta subunits.

The protein localises to the plastid. It is found in the chloroplast. Its function is as follows. This protein binds RuBisCO small and large subunits and is implicated in the assembly of the enzyme oligomer. This chain is RuBisCO large subunit-binding protein subunit alpha, chloroplastic, found in Pisum sativum (Garden pea).